Reading from the N-terminus, the 450-residue chain is Putative MYST-like histone acetyltransferase 1 (450 aa).

A Tudor-knot domain is found at 63 to 122 (LEVGTRVMCRWRDQKLHPVKVIERRKSSTSSSPADYEYYVHYTEFNRRLDEWVKLEQLDL). The region spanning 174–445 (TKVKNIAKIE…VDVSKLIWTP (272 aa)) is the MYST-type HAT domain. The segment at 207-232 (LFFCEFCLNFMKRKEQLQRHMKKCDL) adopts a C2HC MYST-type zinc-finger fold. N6-acetyllysine; by autocatalysis is present on Lys-274. Acetyl-CoA contacts are provided by residues 317–319 (ILT) and 324–330 (QRKGYGK). The active-site Proton donor/acceptor is Glu-350. An acetyl-CoA-binding site is contributed by Ser-354.

It belongs to the MYST (SAS/MOZ) family. Autoacetylation at Lys-274 is required for proper function.

The protein resides in the nucleus. It catalyses the reaction L-lysyl-[protein] + acetyl-CoA = N(6)-acetyl-L-lysyl-[protein] + CoA + H(+). Its function is as follows. Histone acetyltransferase which may be involved in transcriptional activation. This Oryza sativa subsp. japonica (Rice) protein is Putative MYST-like histone acetyltransferase 1.